A 132-amino-acid polypeptide reads, in one-letter code: Flagellar assembly factor FliW (132 aa).

Belongs to the FliW family. As to quaternary structure, interacts with translational regulator CsrA and flagellin(s).

It localises to the cytoplasm. In terms of biological role, acts as an anti-CsrA protein, binds CsrA and prevents it from repressing translation of its target genes, one of which is flagellin. Binds to flagellin and participates in the assembly of the flagellum. The protein is Flagellar assembly factor FliW of Borreliella afzelii (strain PKo) (Borrelia afzelii).